Consider the following 733-residue polypeptide: MNNESKCPFAAAHGVRSPATARANRDWWPNQLNLNILHQHAPASNPLGEDFDYAAEFNTLDLAALKQDLYALMTMSQDWWPADWGHYGGLFIRMAWHSAGTYRTADGRGGGGTGNQRFAPLNSWPDNGNLDKARRLLWPIKQKYGNKISWADLMILAGNCALESMGFKTFGFGGGRADIWQPEEDIYWGAEKEWLATSDKPDSRYSGERQLENPLAAVQMGLIYVNPEGPDGNPDPVASGRDVRETFARMAMNDEETVALVAGGHTFGKAHGAGDPKLVGPEPEGAPIEAQGLGWINSFGTGHGVHTTTSGIEGAWKPNPTKWDNGYFDMLFGYEWALTRSPAGAHQWVAQNVKPEDMIPDAHDPSKKHPPMMTTADLSLRFDPIYEPIARRFHKNPADFADAFARAWFKLTHRDMGPKSRYLGPEVPAEDLIWQDPIPRLDHPLIDAADIATLKAMVLASGVSIAELVSTAWASASTFRGSDMRGGANGARIRLAPQKDWDVNQPAQLAKVLSVLGDIQAGFNAAAPGGKKVSLADLIVLGGCAAVEAAARAAGHVVEVPFTPGRMDASQEQTDVESFAVLEPIADGFRNYQKQVYAVSAEELLVDKAQLLTLSAPEMTVLVGGLRVLGANAGGSPHGVFTRRPQTLSNDFFVNLLDMSTAWKPAGDSFEGRDRKSGELKWTATRVDLVFGSNSQLRALAEVYAQDDAKEKFVRDFVAAWNKVMNLDRFDVK.

The N-terminal stretch at M1 to A23 is a signal peptide. Positions W96–Y224 form a cross-link, tryptophyl-tyrosyl-methioninium (Trp-Tyr) (with M-250). Catalysis depends on H97, which acts as the Proton acceptor. The tryptophyl-tyrosyl-methioninium (Tyr-Met) (with W-96) cross-link spans Y224–M250. H265 is a heme b binding site.

It belongs to the peroxidase family. Peroxidase/catalase subfamily. In terms of assembly, homodimer or homotetramer. It depends on heme b as a cofactor. In terms of processing, formation of the three residue Trp-Tyr-Met cross-link is important for the catalase, but not the peroxidase activity of the enzyme.

It catalyses the reaction H2O2 + AH2 = A + 2 H2O. It carries out the reaction 2 H2O2 = O2 + 2 H2O. Bifunctional enzyme with both catalase and broad-spectrum peroxidase activity. The polypeptide is Catalase-peroxidase (Azoarcus sp. (strain BH72)).